Here is a 464-residue protein sequence, read N- to C-terminus: Serine protease PepD (464 aa).

The interval 1 to 71 (MAKLARVVGL…TQYRQPYEAL (71 aa)) is disordered. Over 1–100 (MAKLARVVGL…GMVRQRPRAG (100 aa)) the chain is Cytoplasmic. A compositionally biased stretch (low complexity) spans 39–48 (QGQQQTYSQQ). Residues 101 to 121 (MLAIGAVTIAVVSAGIGGAAA) traverse the membrane as a helical segment. Topologically, residues 122 to 464 (SLVGFNRAPA…VQVTLGKAEQ (343 aa)) are periplasmic. Active-site charge relay system residues include H197, D236, and S317. In terms of domain architecture, PDZ spans 368-449 (LISTGKASHA…TVALTFQDPS (82 aa)).

This sequence belongs to the peptidase S1C family. Homotrimer. Interacts with numerous proteins, including the 35 kDa antigen PspA.

It localises to the cell inner membrane. Its subcellular location is the secreted. The protein localises to the cell wall. The catalysed reaction is Acts on substrates that are at least partially unfolded. The cleavage site P1 residue is normally between a pair of hydrophobic residues, such as Val-|-Val.. With respect to regulation, probably regulates its own activity by autocleavage, which removes the PDZ domain. Inhibited by the serine protease inhibitor diisopropylfluorophosphate (DFP). Inhibited by fluoroquinolone such as ciprofloxacin, moxifloxacin and ofloxacin and their analogs. Functionally, required for virulence. Acts both as a protease, which degrades and/or refolds damaged substrate targets, and as a chaperone. Plays an important role in the stress response network mediated through the two-component regulatory system MprAB and SigE signaling networks. May utilize its PDZ domain to recognize and process misfolded proteins at the cell membrane, leading to activation of the MprAB and SigE signaling pathways and subsequent establishment of a positive feedback loop that facilitates bacterial adaptation. Interacts with and potentially cleaves several proteins, including the 35 kDa antigen PspA. Proteolytic cleavage of PspA may help to maintain cell envelope homeostasis in Mycobacterium and regulate specific stress response pathways during periods of extracytoplasmic stress. In vitro, exhibits proteolytic activity against the artificial substrate beta-casein. The polypeptide is Serine protease PepD (Mycobacterium tuberculosis (strain ATCC 25618 / H37Rv)).